The sequence spans 214 residues: Melanoregulin (214 aa).

Positions 162–172 match the Cholesterol-binding sequence motif motif; the sequence is LSERYLLVVDR. The residue at position 213 (Ser-213) is a Phosphoserine.

The protein belongs to the melanoregulin family. As to quaternary structure, identified in a complex with RILP and DCTN1; interacts directly with RILP, but does not interact directly with DCTN1. Interacts with PRPH2. In terms of processing, palmitoylated. Palmitoylation is required to maintain the protein at the melanosome membrane. In terms of tissue distribution, detected in melanocytes. Expressed in retina, in retinal pigment epithelium (at protein level). Widely expressed with higher expression in skin, heart, liver, testis and thymus. Detected in retina, in retinal pigment epithelium cells.

Its subcellular location is the apical cell membrane. It localises to the melanosome membrane. It is found in the lysosome membrane. The protein resides in the cytoplasmic vesicle membrane. Its function is as follows. Probably functions as a cargo-recognition protein that couples cytoplasmic vesicles to the transport machinery. Plays a role in hair pigmentation, a process that involves shedding of melanosome-containing vesicles from melanocytes, followed by phagocytosis of the melanosome-containing vesicles by keratinocytes. Functions on melanosomes as receptor for RILP and the complex formed by RILP and DCTN1, and thereby contributes to retrograde melanosome transport from the cell periphery to the center. Overexpression causes accumulation of late endosomes and/or lysosomes at the microtubule organising center (MTOC) at the center of the cell. Probably binds cholesterol and requires the presence of cholesterol in membranes to function in microtubule-mediated retrograde organelle transport. Binds phosphatidylinositol 3-phosphate, phosphatidylinositol 4-phosphate, phosphatidylinositol 5-phosphate and phosphatidylinositol 3,5-bisphosphate, but not phosphatidylinositol 3,4-bisphosphate or phosphatidylinositol 4,5-bisphosphate. Required for normal phagosome clearing and normal activation of lysosomal enzymes in lysosomes from retinal pigment epithelium cells. Required for normal degradation of the lipofuscin component N-retinylidene-N-retinylethanolamine (A2E) in the eye. May function in membrane fusion and regulate the biogenesis of disk membranes of photoreceptor rod cells. The chain is Melanoregulin (Mreg) from Mus musculus (Mouse).